The sequence spans 610 residues: Butyryl-CoA dehydrogenase Swol_1933 (610 aa).

The Proton acceptor role is filled by Glu451.

It belongs to the acyl-CoA dehydrogenase family. It depends on FAD as a cofactor.

Its subcellular location is the cytoplasm. The enzyme catalyses butanoyl-CoA + oxidized [electron-transfer flavoprotein] + H(+) = (2E)-butenoyl-CoA + reduced [electron-transfer flavoprotein]. It carries out the reaction a short-chain 2,3-saturated fatty acyl-CoA + oxidized [electron-transfer flavoprotein] + H(+) = a short-chain (2E)-enoyl-CoA + reduced [electron-transfer flavoprotein]. It functions in the pathway lipid metabolism; butanoate metabolism. In terms of biological role, involved in syntrophic growth of S.wolfei with butyrate, as part of the butyrate oxidation pathway. Catalyzes the oxidation of butanoyl-CoA to crotonyl-CoA. Probably passes the electrons released by this reaction on to electron-transfer flavoproteins (EtfAB) to finally generate hydrogen and/or formate. The polypeptide is Butyryl-CoA dehydrogenase Swol_1933 (Syntrophomonas wolfei subsp. wolfei (strain DSM 2245B / Goettingen)).